Here is a 491-residue protein sequence, read N- to C-terminus: Probable cytosol aminopeptidase (491 aa).

The Mn(2+) site is built by lysine 264 and aspartate 269. Lysine 276 is an active-site residue. 3 residues coordinate Mn(2+): aspartate 287, aspartate 346, and glutamate 348. Residue arginine 350 is part of the active site.

It belongs to the peptidase M17 family. Mn(2+) is required as a cofactor.

It localises to the cytoplasm. The catalysed reaction is Release of an N-terminal amino acid, Xaa-|-Yaa-, in which Xaa is preferably Leu, but may be other amino acids including Pro although not Arg or Lys, and Yaa may be Pro. Amino acid amides and methyl esters are also readily hydrolyzed, but rates on arylamides are exceedingly low.. It carries out the reaction Release of an N-terminal amino acid, preferentially leucine, but not glutamic or aspartic acids.. Functionally, presumably involved in the processing and regular turnover of intracellular proteins. Catalyzes the removal of unsubstituted N-terminal amino acids from various peptides. The sequence is that of Probable cytosol aminopeptidase from Xylella fastidiosa (strain M12).